Consider the following 284-residue polypeptide: MEPSPDAPRAGAAEEQPGPSSSASAPAPAASSNEEEGRHQSQAQQQVQEAQPQPLAQQAPAAAGLSRYESQKRRDWNTFLQYLRNHKPPLTLPRCSGAHVIEFLKYLDQFGKTKVHADGCAYFGEPNPPAPCACPLRQAWGSLDALIGRLRAAYEESGGRPESNPFAARAVRIYLREVREAQAKARGIPYEKKRKRGAAAAAAAPPVVVAPPPVVTAPDDATGTSGGAGEDDDDDEATHSGEQQDTTPAASPTTPPATSVGTTTAAATAAAAKGSAAKGSATSS.

The interval 1 to 69 (MEPSPDAPRA…PAAAGLSRYE (69 aa)) is disordered. 2 stretches are compositionally biased toward low complexity: residues 13–32 (AEEQ…AASS) and 40–63 (QSQA…PAAA). The region spanning 67–194 (RYESQKRRDW…ARGIPYEKKR (128 aa)) is the ALOG domain. The Nuclear localization signal signature appears at 192–196 (KKRKR). The tract at residues 209 to 284 (VAPPPVVTAP…SAAKGSATSS (76 aa)) is disordered. Residues 246–284 (TTPAASPTTPPATSVGTTTAAATAAAAKGSAAKGSATSS) are compositionally biased toward low complexity.

This sequence belongs to the plant homeotic and developmental regulators ALOG protein family.

It is found in the nucleus. Functionally, probable transcription regulator that acts as a developmental regulator by promoting cell growth in response to light. The chain is Protein G1-like9 from Oryza sativa subsp. indica (Rice).